The primary structure comprises 187 residues: Peptidoglycan-recognition protein 2 (187 aa).

Residues 1–19 form the signal peptide; it reads MKAFLVALVVAIELTLVFA. 2 disulfides stabilise this stretch: Cys21-Cys144 and Cys58-Cys64. One can recognise an N-acetylmuramoyl-L-alanine amidase domain in the interval 43-170; sequence KPLKYVIIHH…RTVRPTDSPG (128 aa).

This sequence belongs to the N-acetylmuramoyl-L-alanine amidase 2 family. As to expression, localizes to plasma (at protein level).

The protein resides in the secreted. Peptidoglycan-recognition protein probably involved in innate immunity by binding to peptidoglycans (PGN) of bacteria and activating the prophenoloxidase (proPO) cascade immune response. Binds to 1,3-beta-D-glucan and PGN. In Holotrichia diomphalia (Korean black chafer), this protein is Peptidoglycan-recognition protein 2 (PGRP-2).